A 299-amino-acid polypeptide reads, in one-letter code: Bifunctional protein FolD 2 (299 aa).

Residues 168–170 (GRS), Ser193, and Ile234 contribute to the NADP(+) site.

Belongs to the tetrahydrofolate dehydrogenase/cyclohydrolase family. Homodimer.

The enzyme catalyses (6R)-5,10-methylene-5,6,7,8-tetrahydrofolate + NADP(+) = (6R)-5,10-methenyltetrahydrofolate + NADPH. The catalysed reaction is (6R)-5,10-methenyltetrahydrofolate + H2O = (6R)-10-formyltetrahydrofolate + H(+). The protein operates within one-carbon metabolism; tetrahydrofolate interconversion. Functionally, catalyzes the oxidation of 5,10-methylenetetrahydrofolate to 5,10-methenyltetrahydrofolate and then the hydrolysis of 5,10-methenyltetrahydrofolate to 10-formyltetrahydrofolate. This is Bifunctional protein FolD 2 from Rhizobium meliloti (strain 1021) (Ensifer meliloti).